Consider the following 179-residue polypeptide: Alpha-tubulin N-acetyltransferase (179 aa).

Residues 1–175 (MRVEVVRAPG…NRFVVFDAYF (175 aa)) form the N-acetyltransferase domain. Acetyl-CoA contacts are provided by residues 109–122 (FYVD…GVGL) and 145–154 (SPKLFAFLKK).

Belongs to the acetyltransferase ATAT1 family.

The enzyme catalyses L-lysyl-[alpha-tubulin] + acetyl-CoA = N(6)-acetyl-L-lysyl-[alpha-tubulin] + CoA + H(+). In terms of biological role, specifically acetylates 'Lys-40' in alpha-tubulin on the lumenal side of microtubules. Promotes microtubule destabilization and accelerates microtubule dynamics; this activity may be independent of acetylation activity. Acetylates alpha-tubulin with a slow enzymatic rate, due to a catalytic site that is not optimized for acetyl transfer. Enters the microtubule through each end and diffuses quickly throughout the lumen of microtubules. Acetylates only long/old microtubules because of its slow acetylation rate since it does not have time to act on dynamically unstable microtubules before the enzyme is released. The chain is Alpha-tubulin N-acetyltransferase from Phytophthora infestans (strain T30-4) (Potato late blight agent).